A 350-amino-acid chain; its full sequence is Quinone oxidoreductase-like protein 2 (350 aa).

At K36 the chain carries N6-acetyllysine. At K201 the chain carries N6-succinyllysine. N6-acetyllysine occurs at positions 302 and 328.

This sequence belongs to the zinc-containing alcohol dehydrogenase family. Quinone oxidoreductase subfamily.

This chain is Quinone oxidoreductase-like protein 2, found in Mus musculus (Mouse).